The chain runs to 525 residues: DNA damage-binding protein CMR1 (525 aa).

Disordered regions lie at residues 38–86 and 212–233; these read AGIF…AESE and GILD…EYPD. Basic residues predominate over residues 53–62; sequence TKKKPAPKRV. 7 WD repeats span residues 183 to 224, 241 to 281, 288 to 328, 339 to 379, 384 to 425, 448 to 491, and 494 to 525; these read ITRE…DQNE, PHTN…ATEA, SDDE…KANP, LSEK…TKHP, EHES…KDWK, GKWV…LAQL, and DVIT…CLWM. Residues 223-232 are compositionally biased toward acidic residues; it reads NESDEEDEYP.

Belongs to the WD repeat DDB2/WDR76 family.

DNA-binding protein that binds to both single- and double-stranded DNA. Binds preferentially to UV-damaged DNA. May be involved in DNA-metabolic processes. In Coccidioides immitis (strain RS) (Valley fever fungus), this protein is DNA damage-binding protein CMR1.